A 2007-amino-acid polypeptide reads, in one-letter code: Structural maintenance of chromosomes flexible hinge domain-containing protein 1 (2007 aa).

Residue alanine 2 is modified to N-acetylalanine. Residues 111 to 702 (TKERIDFLPH…LSVTWPEGDE (592 aa)) are ATPase activity domain. The residue at position 833 (serine 833) is a Phosphoserine. Lysine 1350 is subject to N6-acetyllysine. Lysine 1375 participates in a covalent cross-link: Glycyl lysine isopeptide (Lys-Gly) (interchain with G-Cter in SUMO2). Threonine 1500 carries the post-translational modification Phosphothreonine. Residues 1721–1848 (GDILGKIAHL…DNLDAANHYR (128 aa)) enclose the SMC hinge domain. Lysine 1803 carries the N6-succinyllysine modification. Serine 1975 is modified (phosphoserine). The interval 1984–2007 (PIPTKRMRRESTRQNRRPKGDVPN) is disordered.

It belongs to the SMC family. Highly divergent. In terms of assembly, homodimer; homodimerizes via its SMC hinge domain. Interacts with LRIF1. In terms of processing, sumoylated with SUMO1. During embryogenesis, specifically expressed in immature olfactory sensory neurons.

The protein localises to the chromosome. It catalyses the reaction ATP + H2O = ADP + phosphate + H(+). Non-canonical member of the structural maintenance of chromosomes (SMC) protein family that plays a key role in epigenetic silencing by regulating chromatin architecture. Promotes heterochromatin formation in both autosomes and chromosome X, probably by mediating the merge of chromatin compartments. Plays a key role in chromosome X inactivation in females by promoting the spreading of heterochromatin. Recruited to inactivated chromosome X by Xist RNA and acts by mediating the merge of chromatin compartments: promotes random chromatin interactions that span the boundaries of existing structures, leading to create a compartment-less architecture typical of inactivated chromosome X. Required to facilitate Xist RNA spreading. Also required for silencing of a subset of clustered autosomal loci in somatic cells, such as the DUX4 locus. Has ATPase activity; may participate in structural manipulation of chromatin in an ATP-dependent manner as part of its role in gene expression regulation. Also plays a role in DNA repair: localizes to sites of DNA double-strand breaks in response to DNA damage to promote the repair of DNA double-strand breaks. Acts by promoting non-homologous end joining (NHEJ) and inhibiting homologous recombination (HR) repair. Required during preimplantation development, probably acts by regulating chromatin architecture. This Mus musculus (Mouse) protein is Structural maintenance of chromosomes flexible hinge domain-containing protein 1.